Consider the following 693-residue polypeptide: Sodium-dependent phosphate transport protein 2B (693 aa).

The tract at residues 1-46 (MAPWPELENSQPTSEKYTVKADGEQSAKPEKAKETEKDDTGTPITK) is disordered. At 1-89 (MAPWPELENS…KWSERDTKGK (89 aa)) the chain is on the cytoplasmic side. Positions 17 to 40 (YTVKADGEQSAKPEKAKETEKDDT) are enriched in basic and acidic residues. The helical transmembrane segment at 90–110 (ILCVFQGIGKFILLLVFLYFF) threads the bilayer. The Extracellular portion of the chain corresponds to 111–135 (VCSLDVLSSAFQLVGGKVAGKFFNN). A helical membrane pass occupies residues 136–156 (NSIMSNPLAGMVIGVLVTVLV). Over 157–212 (QSSSTSTSIVVSMVASSLLPVHAAIPIIMGANIGTSITNTIVALMQAGDRKEFRRA) the chain is Cytoplasmic. A helical transmembrane segment spans residues 213–233 (FAGATVHDFFNWLSVLVLLPL). Residues 234 to 361 (EAATGYLERL…IFVNFNLSDA (128 aa)) are Extracellular-facing. Cys302 and Cys349 are oxidised to a cystine. N-linked (GlcNAc...) asparagine glycans are attached at residues Asn307 and Asn320. A helical membrane pass occupies residues 362–382 (IVGTILLITSLLILCTCLILI). The Cytoplasmic segment spans residues 383–408 (VKLLGSVLRGQVAAVIKKTINTDFPY). The chain crosses the membrane as a helical span at residues 409-429 (PFSWVTGYLAILVGAGMTFIV). At 430 to 485 (QSSSVFTSAMTPLIGIGVISIQRAYPLTLGANIGTTTTAILAALASPGSTLKSSLQ) the chain is on the extracellular side. Residues 486–506 (IALCHFFFNISGIILWYPIPF) traverse the membrane as a helical segment. Over 507-525 (TRLPIRLAKGLGNISSKYR) the chain is Cytoplasmic. Residues 526 to 546 (WFAIVYLIVFFLLIPLAVFGL) form a helical membrane-spanning segment. At 547 to 550 (SLIG) the chain is on the extracellular side. The chain crosses the membrane as a helical span at residues 551 to 571 (WPVLVGVASPIVLVILLVVVL). Residues 572-693 (KILQSFCPGS…TKIVSSVTAL (122 aa)) are Cytoplasmic-facing.

This sequence belongs to the SLC34A transporter family. Glycosylated.

The protein resides in the apical cell membrane. The enzyme catalyses 3 Na(+)(out) + phosphate(out) = 3 Na(+)(in) + phosphate(in). Its function is as follows. Involved in actively transporting phosphate into cells via Na(+) cotransport. The protein is Sodium-dependent phosphate transport protein 2B (SLC34A2) of Bos taurus (Bovine).